The chain runs to 378 residues: Aminomethyltransferase (378 aa).

This sequence belongs to the GcvT family. The glycine cleavage system is composed of four proteins: P, T, L and H.

The catalysed reaction is N(6)-[(R)-S(8)-aminomethyldihydrolipoyl]-L-lysyl-[protein] + (6S)-5,6,7,8-tetrahydrofolate = N(6)-[(R)-dihydrolipoyl]-L-lysyl-[protein] + (6R)-5,10-methylene-5,6,7,8-tetrahydrofolate + NH4(+). The glycine cleavage system catalyzes the degradation of glycine. This is Aminomethyltransferase from Acidobacterium capsulatum (strain ATCC 51196 / DSM 11244 / BCRC 80197 / JCM 7670 / NBRC 15755 / NCIMB 13165 / 161).